The chain runs to 219 residues: 3,4-dihydroxy-2-butanone 4-phosphate synthase (219 aa).

D-ribulose 5-phosphate-binding positions include 37–38, D42, 150–154, and E174; these read RE and RRGHT. Residue E38 coordinates Mg(2+). A Mg(2+)-binding site is contributed by H153.

This sequence belongs to the DHBP synthase family. Homodimer. Mg(2+) is required as a cofactor. It depends on Mn(2+) as a cofactor.

The catalysed reaction is D-ribulose 5-phosphate = (2S)-2-hydroxy-3-oxobutyl phosphate + formate + H(+). The protein operates within cofactor biosynthesis; riboflavin biosynthesis; 2-hydroxy-3-oxobutyl phosphate from D-ribulose 5-phosphate: step 1/1. Catalyzes the conversion of D-ribulose 5-phosphate to formate and 3,4-dihydroxy-2-butanone 4-phosphate. The chain is 3,4-dihydroxy-2-butanone 4-phosphate synthase from Oleidesulfovibrio alaskensis (strain ATCC BAA-1058 / DSM 17464 / G20) (Desulfovibrio alaskensis).